Reading from the N-terminus, the 275-residue chain is MNPGLYADLTKPTADFIKKDFAETFKLDTTFKGKYGSIVAVTDIKDSGVVASIQPKADFTKYLGKVSNGNFTVDTNGVKKGEFTIENIIPGLKAVANGDSKQNFSTEFQYKKDKIAFTLFGHNNKSFNTSLAFLINPTFSVGVQAEGNAKNTLKNVNATITIRPRPDVFVSIVDRFMDKQILLSTLYTATSKLSFAGDVTVDLKASEKAPSFNVGTQYKIDSASLLKAKVNNNRKVNISYIYNTSNNTKFVLGWNVNTKNFKQGNTFGATVNLTL.

Position 1 is a blocked amino end (Met) (M1).

The protein belongs to the eukaryotic mitochondrial porin family. Highly divergent.

It is found in the mitochondrion outer membrane. Its function is as follows. Forms a channel of about 1,7 nM through the cell membrane that allows diffusion of small hydrophilic molecules. The channel adopts an open conformation at low or zero membrane potential and a closed conformation at potentials above 20 mv. The open state has a weak anion selectivity whereas the closed state is cation-selective. This chain is Mitochondrial outer membrane protein porin (porA), found in Dictyostelium discoideum (Social amoeba).